The following is a 1233-amino-acid chain: MANGVIPPPGGASPLPQVRVPLEEPPLSPDTEEEDDDLGKTLAVSRFGDLISKPPAWDPEKPSRSFSERDFAFHRHISHHTHHPLSARLPPPHKLRRLPPTFARHTRRKRKKEKTSAPPSEGTPPIQEEGGAGAHEGEEEEEEEEEGESETEAVEPPPSGSPQKAKFSIGSDEDDSPGLPGKAAFTKPLPSVGPRSDKSPQRSVSSSSPRARAPRVAGERSRPWSPSASYDLRERLCPGSALGNPGGPEQQVPTDEAEAQMLGSADLDDMKSHRLEDNPGVRRHLVKEPSRVQGGRGSRGGLTPTLRRKKKKQQPDRRPHEVFVELNELMLDRSQEPHWRETARWIKFEEDVEEETERWGKPHVASLSFRSLLELRRTIAHGAALLDLEQTTLPGIAHLVVETMIVSDQIRPEDRASVLRTLLLKHCHPNDDKDCGSFPRNPSSSSVNSVLGNHHATPSHGPDGAVPTMADDLGEPAPLWPHDPDAKERPLHMPGGDGHRGKSLKLLEKIPEDAEATVVLVGCVPFLEQPAAAFVRLSEAVLLESVLEVPVPVRFLFVMLGPSHISTDYHELGRSIATLMSDKLFHEAAYQADDRQDLLGAISEFLDGSIVIPPSEVEGRDLLRSVAAFQRELLRKRREREQTKVEMTTRGGYLAPGKELALELGGSDAAPEDDPLLRTGSVFGGLIRDVKRRYPHYPSDLRDALHSQCVAAVLFIYFAALSPAITFGGLLGEKTEGLMGVSELIVSTAVLGVLFSLLGAQPLLVVGFSGPLLVFEGAFFKFCQAQDLEYLTGRVWVGLWLVVFVLALVGAEGTFLVRYISPFTQEIFAFLISLIFIYETFHKLYKVFTEHPLLPFYPREGALEGAPEARLELNGSAPPPTEGPPGPRNQPNTALLSLILMLGTFLIAFFLRKFRNSRFLGGKARRIIGDFGIPISILLMVLVDYSITDTYTQKLTVPTGLSVTSPHKRTWFIPPLGSARPFPPWMMVAAAVPALLVLILIFMETQITALIVSQKARRLLKGSGFHLDLLLIGSLGGLCGLFGLPWLTAATVRSVTHVNALTVMRTAIAPGDKPQIQEVREQRVTGVLIASLVGLSIVMGAVLRRIPLAVLFGIFLYMGVTSLSGIQLSQRLLLILMPAKHHPEQPYVTKVKTWRMHLFTCIQLACIALLWVVKSTAASLAFPFLLLLTVPLRRCLLPRLFQDRELQALDSEDAEPNFDEDGQDEYNELHMPV.

Residues M1–G11 show a composition bias toward pro residues. 2 disordered regions span residues M1–H320 and D431–R500. The Cytoplasmic portion of the chain corresponds to M1–C709. Residues D58–F73 are compositionally biased toward basic and acidic residues. 2 stretches are compositionally biased toward basic residues: residues H74–R97 and R104–E113. Residues G137–A153 show a composition bias toward acidic residues. S168, S171, S176, and S199 each carry phosphoserine. The segment covering Q201–V216 has biased composition (low complexity). Basic and acidic residues predominate over residues D268–S290. R296 carries the post-translational modification Omega-N-methylarginine. Positions S437–V450 are enriched in low complexity. Positions H482–R500 are enriched in basic and acidic residues. 4 consecutive transmembrane segments (helical) span residues V710 to G732, L738 to F775, V795 to V817, and I827 to F848. The segment at V710–V1233 is membrane (anion exchange). An N-linked (GlcNAc...) asparagine glycan is attached at N874. A helical transmembrane segment spans residues A894–L911. The Cytoplasmic portion of the chain corresponds to R912–R926. Helical transmembrane passes span I927–I947, P981–M1003, L1029–A1050, V1084–S1129, and M1156–L1192. C1166 carries the S-palmitoyl cysteine lipid modification.

It belongs to the anion exchanger (TC 2.A.31) family.

The protein resides in the cell membrane. It catalyses the reaction hydrogencarbonate(in) + chloride(out) = hydrogencarbonate(out) + chloride(in). Its function is as follows. Sodium-independent anion exchanger which mediates the electroneutral exchange of chloride for bicarbonate ions across the cell membrane. May be involved in the regulation of intracellular pH, and the modulation of cardiac action potential. This Oryctolagus cuniculus (Rabbit) protein is Anion exchange protein 3 (SLC4A3).